Here is a 380-residue protein sequence, read N- to C-terminus: Cytochrome b (380 aa).

4 helical membrane passes run 34 to 54 (FGSL…LLAT), 78 to 99 (WLIR…YLHI), 114 to 134 (WNTG…GYVL), and 179 to 199 (FFAL…IHLT). His-84 and His-98 together coordinate heme b. 2 residues coordinate heme b: His-183 and His-197. Position 202 (His-202) interacts with a ubiquinone. Helical transmembrane passes span 227 to 247 (LKDI…ALFS), 289 to 309 (LGGV…PLLH), 321 to 341 (LSQL…WVGS), and 348 to 368 (FIII…ILFP).

The protein belongs to the cytochrome b family. In terms of assembly, the cytochrome bc1 complex contains 11 subunits: 3 respiratory subunits (MT-CYB, CYC1 and UQCRFS1), 2 core proteins (UQCRC1 and UQCRC2) and 6 low-molecular weight proteins (UQCRH/QCR6, UQCRB/QCR7, UQCRQ/QCR8, UQCR10/QCR9, UQCR11/QCR10 and a cleavage product of UQCRFS1). This cytochrome bc1 complex then forms a dimer. Requires heme b as cofactor.

It localises to the mitochondrion inner membrane. Its function is as follows. Component of the ubiquinol-cytochrome c reductase complex (complex III or cytochrome b-c1 complex) that is part of the mitochondrial respiratory chain. The b-c1 complex mediates electron transfer from ubiquinol to cytochrome c. Contributes to the generation of a proton gradient across the mitochondrial membrane that is then used for ATP synthesis. The chain is Cytochrome b (MT-CYB) from Ciconia ciconia (White stork).